We begin with the raw amino-acid sequence, 122 residues long: Histone H2B.1 (122 aa).

Over residues 1–10 (MAPKKAPAAA) the composition is skewed to low complexity. The interval 1–28 (MAPKKAPAAAAEKKVKKAPTTEKKNKKK) is disordered. Ala-2 carries the post-translational modification N,N,N-trimethylalanine. 2 positions are modified to N6-acetyllysine: Lys-5 and Lys-42. Lys-116 participates in a covalent cross-link: Glycyl lysine isopeptide (Lys-Gly) (interchain with G-Cter in ubiquitin).

The protein belongs to the histone H2B family. The nucleosome is a histone octamer containing two molecules each of H2A, H2B, H3 and H4 assembled in one H3-H4 heterotetramer and two H2A-H2B heterodimers. The octamer wraps approximately 147 bp of DNA. Post-translationally, acetylation occurs almost exclusively in the MAC. Monoubiquitination to form H2BK115ub1 gives a specific tag for epigenetic transcriptional activation and is also prerequisite for H3K4me and H3K79me formation.

It localises to the nucleus. The protein resides in the chromosome. Its function is as follows. Core component of nucleosome. Nucleosomes wrap and compact DNA into chromatin, limiting DNA accessibility to the cellular machineries which require DNA as a template. Histones thereby play a central role in transcription regulation, DNA repair, DNA replication and chromosomal stability. DNA accessibility is regulated via a complex set of post-translational modifications of histones, also called histone code, and nucleosome remodeling. The polypeptide is Histone H2B.1 (HTB1) (Tetrahymena thermophila (strain SB210)).